The following is a 295-amino-acid chain: 4-hydroxy-tetrahydrodipicolinate synthase (295 aa).

Residue T47 participates in pyruvate binding. Residue Y135 is the Proton donor/acceptor of the active site. K163 functions as the Schiff-base intermediate with substrate in the catalytic mechanism. I206 is a pyruvate binding site.

This sequence belongs to the DapA family. Homodimer.

The protein localises to the cytoplasm. The catalysed reaction is L-aspartate 4-semialdehyde + pyruvate = (2S,4S)-4-hydroxy-2,3,4,5-tetrahydrodipicolinate + H2O + H(+). It functions in the pathway amino-acid biosynthesis; L-lysine biosynthesis via DAP pathway; (S)-tetrahydrodipicolinate from L-aspartate: step 3/4. Functionally, catalyzes the condensation of (S)-aspartate-beta-semialdehyde [(S)-ASA] and pyruvate to 4-hydroxy-tetrahydrodipicolinate (HTPA). The sequence is that of 4-hydroxy-tetrahydrodipicolinate synthase from Staphylococcus aureus (strain Mu50 / ATCC 700699).